A 760-amino-acid polypeptide reads, in one-letter code: Amyloid beta precursor protein binding family B member 2 (760 aa).

Phosphoserine occurs at positions 123 and 160. 2 disordered regions span residues 177–295 (QNLG…LPPG) and 324–351 (PADLHGSRKGSLSSVTPSPTPENEKQPW). Polar residues-rich tracts occupy residues 212-230 (NKPQSSPEDGQVATVSSSP) and 261-275 (SWTTLSQDSASPSSP). Residues 290–322 (PDLPPGWKRVNDIAGTYYWHIPTGTTQWERPVS) form the WW domain. Phosphoserine occurs at positions 334, 409, and 412. PID domains lie at 413–580 (DPEA…LQVD) and 586–738 (TELV…VTTN).

In terms of assembly, interacts (via C-terminus) with APP (via C-terminus). Interacts with APLP2 (via cytoplasmic domain). As to expression, expressed in the brain, retinal lens and muscle cells (at protein level).

It localises to the endoplasmic reticulum. The protein localises to the golgi apparatus. Its subcellular location is the early endosome. Its function is as follows. Plays a role in the maintenance of lens transparency, and may also play a role in muscle cell strength. Involved in hippocampal neurite branching and neuromuscular junction formation, as a result plays a role in spatial memory functioning. Activates transcription of APP. This chain is Amyloid beta precursor protein binding family B member 2, found in Mus musculus (Mouse).